A 406-amino-acid polypeptide reads, in one-letter code: Probable cysteine desulfurase (406 aa).

Lys-224 is subject to N6-(pyridoxal phosphate)lysine. The Cysteine persulfide intermediate role is filled by Cys-361.

The protein belongs to the class-V pyridoxal-phosphate-dependent aminotransferase family. Csd subfamily. Requires pyridoxal 5'-phosphate as cofactor.

It carries out the reaction (sulfur carrier)-H + L-cysteine = (sulfur carrier)-SH + L-alanine. Functionally, catalyzes the removal of elemental sulfur and selenium atoms from L-cysteine, L-cystine, L-selenocysteine, and L-selenocystine to produce L-alanine. This is Probable cysteine desulfurase (csd) from Halalkalibacterium halodurans (strain ATCC BAA-125 / DSM 18197 / FERM 7344 / JCM 9153 / C-125) (Bacillus halodurans).